Consider the following 238-residue polypeptide: Group 3 late-embryogenesis abundant protein, mitochondrial (238 aa).

A disordered region spans residues 41-62 (SSGSGRPADNWAESQKEKAKAG). Residues 50 to 202 (NWAESQKEKA…AGDLKDKAQQ (153 aa)) are a coiled coil. LEA 11-mer repeat repeat units follow at residues 64-74 (KDAQAEVGKVA), 89-99 (KDAVKQGANDL), 140-150 (KEAAENAWEKT), 151-161 (KDVAENLKDKV), 179-189 (KDRAQDAASEV), and 190-200 (KHKAGDLKDKA). Basic and acidic residues-rich tracts occupy residues 182 to 200 (AQDA…KDKA) and 213 to 225 (DNRK…RRDS). The segment at 182 to 238 (AQDAASEVKHKAGDLKDKAQQVIHDATTQSGDNRKQDQQQRRDSQGSQSGQNSRSRN) is disordered. A compositionally biased stretch (low complexity) spans 226–238 (QGSQSGQNSRSRN).

This sequence belongs to the LEA type 4 family.

Its subcellular location is the mitochondrion. Mitochondrial heat soluble protein acting as a molecular shield in water-deficient condition. In Hypsibius exemplaris (Freshwater tardigrade), this protein is Group 3 late-embryogenesis abundant protein, mitochondrial.